The following is a 449-amino-acid chain: Packaging protein 1 (449 aa).

Positions M1–K10 are enriched in basic residues. Positions M1–P64 are disordered. The segment covering K11 to A25 has biased composition (basic and acidic residues). Positions S35–I59 are enriched in polar residues. G168 to S175 is an ATP binding site. The segment at T437–K449 is DNA-binding.

This sequence belongs to the adenoviridae packaging protein 1 family. Homodimer. Part of a genome packaging complex composed of packaging proteins 1, 2 and 3; this complex specifically binds to the packaging sequence on the left end of viral genomic DNA and performs packaging of the viral genome. Interacts with protein 33K.

The protein resides in the virion. It is found in the host nucleus. Its subcellular location is the host nucleoplasm. The protein localises to the host nucleolus. Component of the packaging machinery which encapsidates the viral DNA into preformed capsids and transcriptional activator of the viral major late promoter (MLP). Binds, along with packaging proteins 2 and 3, to the specific packaging sequence on the left end of viral genomic DNA and displays ATPase activity thereby providing the power stroke of the packaging machinery. The activity of packaging protein IVa2 is stimulated by protein 33K which acts as a terminase. May be the protein that pumps DNA into the capsid powered by ATP hydrolysis. Specifically binds to the 5'-CG-3' nucleotides of the repeats making up the packaging sequence. Component of the DEF-A and DEF-B transcription factors that bind downstream elements of the major late promoter (MLP), and stimulate transcription from the MLP after initiation of viral DNA replication. DEF-A is a heterodimer packaging proteins 1 and 2 and DEF-B is a homodimer of packaging protein 1. This chain is Packaging protein 1, found in Mus musculus (Mouse).